Consider the following 206-residue polypeptide: LexA repressor (206 aa).

Positions 28–48 (VREIGEAVGLASSSTVHGHLD) form a DNA-binding region, H-T-H motif. Catalysis depends on for autocatalytic cleavage activity residues Ser128 and Lys166.

Belongs to the peptidase S24 family. Homodimer.

The catalysed reaction is Hydrolysis of Ala-|-Gly bond in repressor LexA.. Represses a number of genes involved in the response to DNA damage (SOS response), including recA and lexA. In the presence of single-stranded DNA, RecA interacts with LexA causing an autocatalytic cleavage which disrupts the DNA-binding part of LexA, leading to derepression of the SOS regulon and eventually DNA repair. This Exiguobacterium sp. (strain ATCC BAA-1283 / AT1b) protein is LexA repressor.